A 130-amino-acid polypeptide reads, in one-letter code: Small ribosomal subunit protein uS8 (130 aa).

The protein belongs to the universal ribosomal protein uS8 family. As to quaternary structure, part of the 30S ribosomal subunit. Contacts proteins S5 and S12.

Its function is as follows. One of the primary rRNA binding proteins, it binds directly to 16S rRNA central domain where it helps coordinate assembly of the platform of the 30S subunit. In Aeromonas hydrophila subsp. hydrophila (strain ATCC 7966 / DSM 30187 / BCRC 13018 / CCUG 14551 / JCM 1027 / KCTC 2358 / NCIMB 9240 / NCTC 8049), this protein is Small ribosomal subunit protein uS8.